A 122-amino-acid chain; its full sequence is NADPH-dependent 7-cyano-7-deazaguanine reductase (122 aa).

Cys-34 functions as the Thioimide intermediate in the catalytic mechanism. Asp-41 (proton donor) is an active-site residue. Substrate contacts are provided by residues 56 to 58 and 75 to 76; these read VEL and HE.

Belongs to the GTP cyclohydrolase I family. QueF type 1 subfamily.

It localises to the cytoplasm. It carries out the reaction 7-aminomethyl-7-carbaguanine + 2 NADP(+) = 7-cyano-7-deazaguanine + 2 NADPH + 3 H(+). It functions in the pathway tRNA modification; tRNA-queuosine biosynthesis. Catalyzes the NADPH-dependent reduction of 7-cyano-7-deazaguanine (preQ0) to 7-aminomethyl-7-deazaguanine (preQ1). The sequence is that of NADPH-dependent 7-cyano-7-deazaguanine reductase from Anaeromyxobacter dehalogenans (strain 2CP-1 / ATCC BAA-258).